The chain runs to 359 residues: Mitochondrial glutathione transporter SLC25A39 (359 aa).

Over 1–14 the chain is Mitochondrial intermembrane; the sequence is MDDQDPGGISPLQQ. Solcar repeat units follow at residues 9-151, 159-243, and 253-347; these read ISPL…LKAF, SDLY…VKSQ, and TSVG…GKSF. A helical transmembrane segment spans residues 15–35; that stretch reads MVASGAGAVVTSLFMTPLDVV. Residues 36 to 121 lie on the Mitochondrial matrix side of the membrane; it reads KVRLQSQRPT…VKIVRHEGTR (86 aa). Residues Cys-74, Cys-78, Cys-88, and Cys-94 each coordinate [2Fe-2S] cluster. A helical transmembrane segment spans residues 122–142; the sequence is TLWSGLPATLVMTVPATAIYF. Topologically, residues 143-164 are mitochondrial intermembrane; the sequence is TAYDQLKAFLCGQSLTSDLYAP. A helical transmembrane segment spans residues 165–185; it reads MVAGALARMGTVTVVSPLELV. The Mitochondrial matrix portion of the chain corresponds to 186-214; sequence RTKLQAQHVSYRELAACVQAAVAQGGWRS. The helical transmembrane segment at 215 to 235 threads the bilayer; that stretch reads LWLGWGPTALRDVPFSALYWF. Residues 236 to 255 are Mitochondrial intermembrane-facing; it reads NYELVKSQLNGPRQKEQTSV. Residues 256–276 form a helical membrane-spanning segment; sequence GISFVAGGISGMVAATLTLPF. The Mitochondrial matrix portion of the chain corresponds to 277–317; the sequence is DVVKTQRQMSLGAVEAMRVKPPRVDSTWLLLRRIQAESGTR. A helical membrane pass occupies residues 318 to 338; it reads GLFAGFLPRIIKAAPSCAIMI. Residues 339-359 are Mitochondrial intermembrane-facing; it reads STYEFGKSFFHRLNQEQPLGH.

The protein belongs to the mitochondrial carrier (TC 2.A.29) family. Post-translationally, cleaved and degraded by AFG3L2; degradation by AFG3L2 is regulated by the ability of SLC25A39 to bind iron-sulfur. In absence of mitochondrial glutathione, SLC25A39 binds iron-sulfur, preventing cleavage and degradation by AFG3L2. The presence of mitochondrial glutathione prevents iron-sulfur-binding to SLC25A39, promoting cleavage and degradation by AFG3L2.

Its subcellular location is the mitochondrion inner membrane. It catalyses the reaction glutathione(in) = glutathione(out). The activity of SLC25A39 is regulated by levels of mitochondrial glutathione via its ability to bind [2Fe-2S] iron-sulfur cluster. Upon physiological levels of mitochondrial glutathione, glutathione prevents iron-sulfur-binding to SLC25A39 promoting cleavage and degradation by AFG3L2. Upon depletion of mitochondrial glutathione, SLC25A39 binds iron-sulfur, preventing cleavage and degradation by AFG3L2. In terms of biological role, mitochondrial transporter required for glutathione import into mitochondria. Glutathione, which plays key roles in oxidative metabolism, is produced exclusively in the cytosol and is imported in many organelles. Mitochondrial glutathione is required for the activity and stability of proteins containing iron-sulfur clusters, as well as erythropoiesis. This chain is Mitochondrial glutathione transporter SLC25A39 (Slc25a39), found in Rattus norvegicus (Rat).